Here is a 682-residue protein sequence, read N- to C-terminus: 1,4-alpha-glucan-branching enzyme (682 aa).

Residues W88 and K124 each contribute to the (1,4-alpha-D-glucosyl)n site. The active-site Nucleophile is D342. E397 functions as the Proton donor in the catalytic mechanism.

This sequence belongs to the glycosyl hydrolase 13 family. GlgB subfamily.

Its subcellular location is the cytoplasm. The catalysed reaction is Transfers a segment of a (1-&gt;4)-alpha-D-glucan chain to a primary hydroxy group in a similar glucan chain.. It functions in the pathway glycan biosynthesis; glycogen biosynthesis. Functionally, glycogen-branching enzyme participates in the glycogen biosynthetic process along with glycogenin and glycogen synthase. Generates alpha-1,6-glucosidic branches from alpha-1,4-linked glucose chains, to increase solubility of the glycogen polymer. This chain is 1,4-alpha-glucan-branching enzyme (GLC3), found in Cryptococcus neoformans var. neoformans serotype D (strain B-3501A) (Filobasidiella neoformans).